Consider the following 37-residue polypeptide: Albumin-2 (37 aa).

One copy of the Hemopexin repeat lies at Ile6–Lys37.

As to quaternary structure, dimer. Expressed in seeds (at protein level).

It localises to the cytoplasm. Its subcellular location is the cytosol. Binds hemin and thiamine. This chain is Albumin-2, found in Lens culinaris (Lentil).